A 637-amino-acid polypeptide reads, in one-letter code: Neurexin-3-beta (637 aa).

The N-terminal stretch at M1 to S35 is a signal peptide. Over S36 to T562 the chain is Extracellular. The segment covering S43–H52 has biased composition (low complexity). The interval S43–H65 is disordered. A compositionally biased stretch (basic residues) spans H55–H65. The Laminin G-like domain maps to A85 to V255. Residues D137 and I154 each coordinate Ca(2+). Residue N184 is glycosylated (N-linked (GlcNAc...) asparagine). I206 and N208 together coordinate Ca(2+). Residues N252 and N296 are each glycosylated (N-linked (GlcNAc...) asparagine). The segment at A289–V310 is disordered. Residues S298 to V310 show a composition bias toward polar residues. A glycan (O-linked (Xyl...) (heparan sulfate) serine) is linked at S312. The chain crosses the membrane as a helical span at residues G563–M583. The Cytoplasmic segment spans residues Y584–V637. The tract at residues N605–V637 is disordered.

The protein belongs to the neurexin family. Weakly interacts with CBLN1 and CBLN2. Very weak binding, if any, to CBLN4. Specific isoforms bind neuroligins NLGN1, NLGN2 and NLGN3. Interacts with CLSTN3. In terms of processing, processed by alpha-secretase leading to the formation of an extracellular soluble protein as well as a C-terminal membrane-embedded fragment (CTF). Proteolysis of these CTFs by gamma-secretase releases intracellular domains (ICDs) and extracellular peptides. Post-translationally, O-glycosylated; contains heparan sulfate. Heparan sulfate attachment is required for synapse development by mediating interactions with neuroligins. Expressed in the blood vessel walls (at protein level).

The protein resides in the presynaptic cell membrane. Its function is as follows. Neuronal cell surface protein that may be involved in cell recognition and cell adhesion. May mediate intracellular signaling. Functions as part of a trans-synaptic complex by binding to cerebellins and postsynaptic GRID1. This interaction helps regulate the activity of NMDA and AMPA receptors at hippocampal synapses without affecting synapse formation. NRXN3B-CBLN2-GRID1 complex transduce presynaptic signals into postsynaptic AMPAR response. This Homo sapiens (Human) protein is Neurexin-3-beta.